Here is a 118-residue protein sequence, read N- to C-terminus: p-cumate 2,3-dioxygenase system, ferredoxin component (118 aa).

The Rieske domain occupies 14-111 (VGLCATDDVA…VTVEGGQIFV (98 aa)). Cys-54, His-56, Cys-74, and His-77 together coordinate [2Fe-2S] cluster.

It belongs to the bacterial ring-hydroxylating dioxygenase ferredoxin component family. The p-cumate 2,3-dioxygenase multicomponent enzyme system is composed of an electron transfer component and a dioxygenase component (iron sulfur protein (ISP)). The electron transfer component is composed of a ferredoxin reductase (CmtAa) and a ferredoxin (CmtAd), and the dioxygenase component is formed of a large alpha subunit (CmtAb) and a small beta subunit (CmtAc). [2Fe-2S] cluster is required as a cofactor.

It participates in aromatic compound metabolism; p-cumate degradation; acetaldehyde and pyruvate from p-cumate. Functionally, component of the p-cumate 2,3-dioxygenase multicomponent enzyme system which catalyzes the incorporation of both atoms of molecular oxygen into p-cumate to form cis-2,3-dihydroxy-2,3-dihydro-p-cumate. Functions as an intermediate electron transfer protein via a specific interaction with iron sulfur protein components (ISP)(CmtAb and CmtAc). This Pseudomonas putida (Arthrobacter siderocapsulatus) protein is p-cumate 2,3-dioxygenase system, ferredoxin component.